Consider the following 63-residue polypeptide: Lantibiotic mutacin-1140 (63 aa).

Positions 1 to 41 (MSNTQLLEVLGTETFDVQEDLFAFDTTDTTIVASNDDPDTR) are excised as a propeptide. The lanthionine (Ser-Cys) cross-link spans 44–48 (SWSLC). Ser-46 carries the 2,3-didehydroalanine (Ser) modification. Positions 49–52 (TPGC) form a cross-link, beta-methyllanthionine (Thr-Cys). Thr-55 is subject to 2,3-didehydrobutyrine. A cross-link (lanthionine (Ser-Cys)) is located at residues 57–62 (SFNSYC). The S-(2-aminovinyl)-D-cysteine (Ser-Cys) cross-link spans 60-63 (SYCC).

This sequence belongs to the type A lantibiotic family. In terms of processing, maturation of lantibiotics involves the enzymatic conversion of Thr, and Ser into dehydrated AA and the formation of thioether bonds with cysteine. The C-terminal lanthionine undergoes decarboxylation. This is followed by membrane translocation and cleavage of the modified precursor. The structure of the 2,3-didehydrobutyrine is not discussed in PubMed:11082191.

Functionally, lanthionine-containing peptide antibiotic (lantibiotic) active on Gram-positive bacteria. The bactericidal activity of lantibiotics is based on depolarization of energized bacterial cytoplasmic membranes, initiated by the formation of aqueous transmembrane pores. The polypeptide is Lantibiotic mutacin-1140 (lanA) (Streptococcus mutans).